The primary structure comprises 657 residues: Glycogen debranching enzyme (657 aa).

Catalysis depends on Asp-336, which acts as the Nucleophile. Glu-371 (proton donor) is an active-site residue. A compositionally biased stretch (basic and acidic residues) spans 458–467 (NEANGEENRD). Positions 458-479 (NEANGEENRDGTNNNYSNNHGK) are disordered.

The protein belongs to the glycosyl hydrolase 13 family.

It catalyses the reaction Hydrolysis of (1-&gt;6)-alpha-D-glucosidic linkages to branches with degrees of polymerization of three or four glucose residues in limit dextrin.. The protein operates within glycan degradation; glycogen degradation. In terms of biological role, removes maltotriose and maltotetraose chains that are attached by 1,6-alpha-linkage to the limit dextrin main chain, generating a debranched limit dextrin. This is Glycogen debranching enzyme from Escherichia coli O139:H28 (strain E24377A / ETEC).